The primary structure comprises 171 residues: Signal peptidase complex catalytic subunit SEC11 (171 aa).

The Cytoplasmic segment spans residues 1-6; it reads MNIRQQ. Residues 7–24 form a helical; Signal-anchor for type II membrane protein membrane-spanning segment; that stretch reads LVQLLNLAMVLSTAFMFW. The Lumenal segment spans residues 25–171; that stretch reads KGLGLVTNSN…MALSTLLTRE (147 aa). Active-site charge relay system residues include Ser-44, His-83, and Asp-113. Residues 157-168 form a C-terminal short (CTS) helix region; that stretch reads GLLGLMALSTLL.

The protein belongs to the peptidase S26B family. Component of the signal peptidase complex (SPC) composed of a catalytic subunit SEC11 and three accessory subunits SPC1, SPC2 and SPC3. The complex induces a local thinning of the ER membrane which is used to measure the length of the signal peptide (SP) h-region of protein substrates. This ensures the selectivity of the complex towards h-regions shorter than 18-20 amino acids. SPC associates with the translocon complex.

The protein resides in the endoplasmic reticulum membrane. The enzyme catalyses Cleavage of hydrophobic, N-terminal signal or leader sequences from secreted and periplasmic proteins.. In terms of biological role, catalytic component of the signal peptidase complex (SPC) which catalyzes the cleavage of N-terminal signal sequences from nascent proteins as they are translocated into the lumen of the endoplasmic reticulum. Specifically cleaves N-terminal signal peptides that contain a hydrophobic alpha-helix (h-region) shorter than 18-20 amino acids. This Komagataella phaffii (strain GS115 / ATCC 20864) (Yeast) protein is Signal peptidase complex catalytic subunit SEC11 (SEC11).